The following is a 373-amino-acid chain: P2Y purinoceptor 2 (373 aa).

The Extracellular portion of the chain corresponds to 1–32 (MAADLEPWNSTINGTWEGDELGYKCRFNEDFK). N-linked (GlcNAc...) asparagine glycosylation is found at N9 and N13. A helical membrane pass occupies residues 33–59 (YVLLPVSYGVVCVLGLCLNVVALYIFL). Residues 60–70 (CRLKTWNASTT) lie on the Cytoplasmic side of the membrane. The chain crosses the membrane as a helical span at residues 71–93 (YMFHLAVSDSLYAASLPLLVYYY). Topologically, residues 94–110 (ARGDHWPFSTVLCKLVR) are extracellular. An intrachain disulfide couples C106 to C183. The helical transmembrane segment at 111–129 (FLFYTNLYCSILFLTCISV) threads the bilayer. Residues 130–152 (HRCLGVLRPLHSLRWGRARYARR) lie on the Cytoplasmic side of the membrane. Residues 153-172 (VAAVVWVLVLACQAPVLYFV) traverse the membrane as a helical segment. At 173 to 194 (TTSVRGTRITCHDTSARELFSH) the chain is on the extracellular side. A helical membrane pass occupies residues 195-220 (FVAYSSVMLGLLFAVPFSVILVCYVL). The Cytoplasmic segment spans residues 221-246 (MARRLLKPAYGTTGGLPRAKRKSVRT). A helical transmembrane segment spans residues 247–269 (IALVLAVFALCFLPFHVTRTLYY). Residues 270-287 (SFRSLDLSCHTLNAINMA) are Extracellular-facing. Residues 288–309 (YKITRPLASANSCLDPVLYFLA) traverse the membrane as a helical segment. The Cytoplasmic segment spans residues 310–373 (GQRLVRFARD…AGSETKDIRL (64 aa)). The disordered stretch occupies residues 318-373 (RDAKPPTEPTPSPQARRKLGLHRPNRTVRKDLSVSSDDSRRTESTPAGSETKDIRL). Basic residues predominate over residues 332–344 (ARRKLGLHRPNRT). A compositionally biased stretch (basic and acidic residues) spans 345–360 (VRKDLSVSSDDSRRTE).

It belongs to the G-protein coupled receptor 1 family. In terms of tissue distribution, spleen, testis, kidney, liver, lung, heart and brain.

Its subcellular location is the cell membrane. Receptor for ATP and UTP coupled to G-proteins that activate a phosphatidylinositol-calcium second messenger system. The affinity range is UTP = ATP &gt; ATP-gamma-S &gt;&gt; 2-methylthio-ATP = ADP. The protein is P2Y purinoceptor 2 (P2ry2) of Mus musculus (Mouse).